Consider the following 552-residue polypeptide: Kumamolisin (552 aa).

Residues 1-17 (MSDMEKPWKEEEKREVL) show a composition bias toward basic and acidic residues. A disordered region spans residues 1-34 (MSDMEKPWKEEEKREVLAGHARRQAPQAVDKGPV). Residues 193 to 546 (AYTPLDVAQA…IRLLQALLPS (354 aa)) form the Peptidase S53 domain. Residues E266, D270, and S466 each act as charge relay system in the active site. Ca(2+) is bound by residues D504, I505, G522, G524, and D526.

As to quaternary structure, forms monomeric and dimeric crystals. It depends on Ca(2+) as a cofactor. Post-translationally, autocatalytically processed.

It is found in the secreted. It carries out the reaction The enzyme preferentially hydrolyzes peptides having an Ala or Pro residue at P2 position and prefers such charged amino acid residues as Glu or Arg at the P2' position. In the oxidized insulin B chain, kumamolysin preferentially cleaves between Leu(15) and Tyr(16).. With respect to regulation, inactivated at 22.4 and 37 degrees Celsius, but not at 60 degrees Celsius, by aldehyde-type inhibitors such as acetyl-Ile-Ala-Phe-CHO and acetyl-Ile-Pro-Phe-CHO. Insensitive to the known carboxyl proteinase inhibitors pepstatin, diazoacetyl-DL-norleucine methyl ester (DAN) and 1,2-epoxy-3-(p-nitrophenoxy)propane (EPNP). Not inhibited by Ala-Ala-Phe-chloromethylketone, an inhibitor of the human tripeptidyl-peptidase 1. Thermostable pepstatin-insensitive serine-carboxyl proteinase. Preferentially hydrolyzes synthetic peptides having an Ala or Pro residue at the P2 position and charged amino acids such as Glu or Arg at the P2' position. In vitro, specifically hydrolyzes the Leu-15-Tyr-16 peptide bond in oxidized insulin B-chain. Additional cleavage of oxidized insulin B-chain at Phe-25-Tyr-26 is detected at a considerably lower rate. Can hydrolyze collagen and the chromogenic substrate azocoll. Shows lower activity with albumin and casein. Shows very weak tripeptidyl peptidase activity. The protein is Kumamolisin of Bacillus sp. (strain MN-32).